The sequence spans 435 residues: 5-methylthioadenosine/S-adenosylhomocysteine deaminase (435 aa).

Zn(2+) is bound by residues H65 and H67. E94, R150, and H189 together coordinate substrate. A Zn(2+)-binding site is contributed by H216. Residues E219 and D304 each coordinate substrate. Residue D304 participates in Zn(2+) binding.

It belongs to the metallo-dependent hydrolases superfamily. MTA/SAH deaminase family. It depends on Zn(2+) as a cofactor.

The enzyme catalyses S-adenosyl-L-homocysteine + H2O + H(+) = S-inosyl-L-homocysteine + NH4(+). The catalysed reaction is S-methyl-5'-thioadenosine + H2O + H(+) = S-methyl-5'-thioinosine + NH4(+). Functionally, catalyzes the deamination of 5-methylthioadenosine and S-adenosyl-L-homocysteine into 5-methylthioinosine and S-inosyl-L-homocysteine, respectively. Is also able to deaminate adenosine. This is 5-methylthioadenosine/S-adenosylhomocysteine deaminase from Bacillus cereus (strain 03BB102).